The primary structure comprises 1099 residues: Adenylate cyclase type 7 (1099 aa).

Residues 1–33 (MPAKGRYFLNEGDEGPDQAALYEKYRLTSLHGP) are Cytoplasmic-facing. Helical transmembrane passes span 34–54 (LLLLLLLVAAATCIALISIAF), 63–83 (QVVLGTAFLMLTLFVALYVLV), 95–117 (ALALLTWACLMVLGSVLMWDSLE), 122–142 (AWEQVPFFLFVVFVVYALLPL), 147–167 (AIVAGVTSTVSHLLVFGAVTR), and 178–198 (LGLQLLANAVILLGGNFTGAF). Over 199-595 (HKHQLQDASR…YRLVPIPRAR (397 aa)) the chain is Cytoplasmic. Mg(2+) is bound by residues D286, I287, and D330. ATP is bound by residues 286–291 (DIVGFT), 328–330 (LGD), and R374. The disordered stretch occupies residues 456–476 (DPRSQQPPPPSHHLSKPKGDA). The mediates regulation of adenylate cyclase activity by C5 alpha-induced G- beta and gamma pathway stretch occupies residues 479 to 484 (KMRASV). The tract at residues 493-501 (WGAARPFAH) is mediates regulation of adenylate cyclase activity by sphingosine 1-phosphate-induced G alpha 13 pathway. The segment at 504-543 (HRESVSSSETPISNGRRQKAIPLRRHRAPDRSASPKGRLE) is disordered. The span at 508–518 (VSSSETPISNG) shows a compositional bias: polar residues. The interval 508–585 (VSSSETPISN…IFLEKGFERE (78 aa)) is modulates adenylate cyclase activity by modulating the binding of G(s)alpha to the high-affinity G(s)alpha binding site in 7C1a/7C2. Basic residues predominate over residues 519-531 (RRQKAIPLRRHRA). Transmembrane regions (helical) follow at residues 596–616 (YDFACASLVFVCILLVHLLVM), 621–641 (TLGVSFGLVACLLGLVLSFCF), and 670–689 (LVLVVLTVGSLLTVAIINMP). An N-linked (GlcNAc...) asparagine glycan is attached at N702. Transmembrane regions (helical) follow at residues 719–738 (LLPYYTCSCILGFIACSVFL), 747–766 (MLLTVALVAYLLLFNLSPCW), and 813–833 (DLKIMVNFYLILFYATLILLS). Topologically, residues 834–1099 (RQIDYYCRLD…TAKFQGLGLN (266 aa)) are cytoplasmic. ATP-binding positions include K950, 1029–1031 (DIW), 1036–1040 (NVASR), and K1076.

This sequence belongs to the adenylyl cyclase class-4/guanylyl cyclase family. Requires Mg(2+) as cofactor. Mn(2+) is required as a cofactor. Post-translationally, phosphorylated by PRKCD. Most abundant in heart, spleen and lung.

Its subcellular location is the membrane. The catalysed reaction is ATP = 3',5'-cyclic AMP + diphosphate. With respect to regulation, activated by the G protein alpha subunit. Activated by the G protein beta and gamma subunit complex. Activated by GNA13 and GNA12. Ethanol and phorbol 12,13-dibutanoate significantly potentiate adenylate cyclase activity generated in response to the activation of the prostanoid receptor by the agonist prostaglandin E1(1-) in a PKC-dependent manner. Inhibited by lithium. Catalyzes the formation of cAMP in response to activation of G protein-coupled receptors. Functions in signaling cascades activated namely by thrombin and sphingosine 1-phosphate and mediates regulation of cAMP synthesis through synergistic action of the stimulatory G alpha protein with GNA13. Also, during inflammation, mediates zymosan-induced increase intracellular cAMP, leading to protein kinase A pathway activation in order to modulate innate immune responses through heterotrimeric G proteins G(12/13). Functions in signaling cascades activated namely by dopamine and C5 alpha chain and mediates regulation of cAMP synthesis through synergistic action of the stimulatory G protein with G beta:gamma complex. Functions, through cAMP response regulation, to keep inflammation under control during bacterial infection by sensing the presence of serum factors, such as the bioactive lysophospholipid (LPA) that regulate LPS-induced TNF-alpha production. However, it is also required for the optimal functions of B and T cells during adaptive immune responses by regulating cAMP synthesis in both B and T cells. The protein is Adenylate cyclase type 7 of Mus musculus (Mouse).